The chain runs to 200 residues: Ras-related protein Rab-10 (200 aa).

S18, G19, V20, G21, K22, T23, C24, N35, T36, S40, and T41 together coordinate GTP. T23 lines the Mg(2+) pocket. Short sequence motifs (switch) lie at residues 32–46 (DAFNTTFISTIEIDF) and 64–81 (DTAGQERFHTITTSYYRG). 2 residues coordinate Mg(2+): T41 and D64. Position 67 (G67) interacts with GTP. Phosphothreonine is present on T73. K102 is modified (N6-acetyllysine). K102 participates in a covalent cross-link: Glycyl lysine isopeptide (Lys-Gly) (interchain with G-Cter in ubiquitin). Residues N122, K123, D125, and M126 each coordinate GTP. K136 is covalently cross-linked (Glycyl lysine isopeptide (Lys-Gly) (interchain with G-Cter in ubiquitin)). Positions 152, 153, and 154 each coordinate GTP. A Glycyl lysine isopeptide (Lys-Gly) (interchain with G-Cter in ubiquitin) cross-link involves residue K154. 2 S-geranylgeranyl cysteine lipidation sites follow: C199 and C200.

This sequence belongs to the small GTPase superfamily. Rab family. In terms of assembly, interacts with MYO5A; mediates the transport to the plasma membrane of SLC2A4/GLUT4 storage vesicles. Interacts with GDI1 and with GDI2; negatively regulates RAB10 association with membranes and activation. Interacts (GDP-bound form) with LLGL1; the interaction is direct and promotes RAB10 association with membranes and activation through competition with the Rab inhibitor GDI1. Interacts with EXOC4; probably associates with the exocyst. Interacts (GTP-bound form) with MICALCL, MICAL1, MICAL3, EHBP1 and EHBP1L1; at least in case of MICAL1 two molecules of RAB10 can bind to one molecule of MICAL1. Interacts with TBC1D13. Interacts with SEC16A. Interacts with CHM. Interacts with LRRK2; interaction facilitates phosphorylation of Thr-73. Interacts with RILPL1 and RILPL2 when phosphorylated on Thr-73. Interacts with TBC1D21. Interacts with MARCKS. It depends on Mg(2+) as a cofactor. In terms of processing, phosphorylation of Thr-73 in the switch II region by LRRK2 prevents the association of RAB regulatory proteins, including CHM and RAB GDP dissociation inhibitors GDI1 and GDI2. Phosphorylation of Thr-73 by LRRK2 is stimulated by RAB29 and RAB32. Phosphorylation by LRRK2 is required for localization to stressed lysosomes. In terms of tissue distribution, highest levels in neural and muscle tissues.

The protein localises to the cytoplasmic vesicle membrane. The protein resides in the golgi apparatus. It localises to the trans-Golgi network membrane. Its subcellular location is the endosome membrane. It is found in the recycling endosome membrane. The protein localises to the cytoplasmic vesicle. The protein resides in the phagosome membrane. It localises to the cell projection. Its subcellular location is the cilium. It is found in the endoplasmic reticulum membrane. The protein localises to the cytoplasm. The protein resides in the perinuclear region. It localises to the lysosome. The enzyme catalyses GTP + H2O = GDP + phosphate + H(+). With respect to regulation, regulated by guanine nucleotide exchange factors (GEFs) DENND4C and RABIF which promote the exchange of bound GDP for free GTP. Regulated by GTPase activating proteins (GAPs) including TBC1D21 which increase the GTP hydrolysis activity. Inhibited by GDP dissociation inhibitors GDI1 and GDI2 which prevent Rab-GDP dissociation. The small GTPases Rab are key regulators of intracellular membrane trafficking, from the formation of transport vesicles to their fusion with membranes. Rabs cycle between an inactive GDP-bound form and an active GTP-bound form that is able to recruit to membranes different set of downstream effectors directly responsible for vesicle formation, movement, tethering and fusion. That Rab is mainly involved in the biosynthetic transport of proteins from the Golgi to the plasma membrane. Regulates, for instance, SLC2A4/GLUT4 glucose transporter-enriched vesicles delivery to the plasma membrane. In parallel, it regulates the transport of TLR4, a toll-like receptor to the plasma membrane and therefore may be important for innate immune response. Also plays a specific role in asymmetric protein transport to the plasma membrane. In neurons, it is involved in axonogenesis through regulation of vesicular membrane trafficking toward the axonal plasma membrane. In epithelial cells, it regulates transport from the Golgi to the basolateral membrane. May play a role in the basolateral recycling pathway and in phagosome maturation. May play a role in endoplasmic reticulum dynamics and morphology controlling tubulation along microtubules and tubules fusion. Together with LRRK2, RAB8A, and RILPL1, it regulates ciliogenesis. When phosphorylated by LRRK2 on Thr-73, it binds RILPL1 and inhibits ciliogenesis. Participates in the export of a subset of neosynthesized proteins through a Rab8-Rab10-Rab11-dependent endososomal export route. Targeted to and stabilized on stressed lysosomes through LRRK2 phosphorylation where it promotes the extracellular release of lysosomal content through EHBP1 and EHNP1L1 effector proteins. The polypeptide is Ras-related protein Rab-10 (Rattus norvegicus (Rat)).